A 141-amino-acid polypeptide reads, in one-letter code: MSFASEFKQFIAKGNAMDLAVGVIIGAAFSKIVASIVDDLIMPIVGAVFGGFDFSNLFIALGSVPEGVALTLAEVRKAGVPVLAYGNFVTVLLNFLILALIVFIIVRQINRLKRPAPGAAPAAPPEDIVLLREIRDALRQK.

3 consecutive transmembrane segments (helical) span residues 17–37, 40–60, and 86–106; these read MDLA…ASIV, LIMP…LFIA, and GNFV…FIIV.

This sequence belongs to the MscL family. In terms of assembly, homopentamer.

It localises to the cell inner membrane. Its function is as follows. Channel that opens in response to stretch forces in the membrane lipid bilayer. May participate in the regulation of osmotic pressure changes within the cell. The polypeptide is Large-conductance mechanosensitive channel (Thiobacillus denitrificans (strain ATCC 25259 / T1)).